Consider the following 37-residue polypeptide: Large ribosomal subunit protein bL36 (37 aa).

Belongs to the bacterial ribosomal protein bL36 family.

The polypeptide is Large ribosomal subunit protein bL36 (Nitratiruptor sp. (strain SB155-2)).